The following is a 238-amino-acid chain: UPF0758 protein Dtpsy_2777 (238 aa).

The MPN domain maps to 116–238; the sequence is VFDSPQAVQH…ALSMAEQGLV (123 aa). Zn(2+)-binding residues include H187, H189, and D200. Positions 187–200 match the JAMM motif motif; the sequence is HNHPSGSVQPSRAD.

Belongs to the UPF0758 family.

In Acidovorax ebreus (strain TPSY) (Diaphorobacter sp. (strain TPSY)), this protein is UPF0758 protein Dtpsy_2777.